The following is a 245-amino-acid chain: Large ribosomal subunit protein uL3 (245 aa).

N5-methylglutamine is present on Gln-152. The tract at residues 224–245 (RSKAVQAEAAAPAEAAAPEGDN) is disordered. Residues 230–245 (AEAAAPAEAAAPEGDN) are compositionally biased toward low complexity.

The protein belongs to the universal ribosomal protein uL3 family. Part of the 50S ribosomal subunit. Forms a cluster with proteins L14 and L19. Post-translationally, methylated by PrmB.

Functionally, one of the primary rRNA binding proteins, it binds directly near the 3'-end of the 23S rRNA, where it nucleates assembly of the 50S subunit. The protein is Large ribosomal subunit protein uL3 of Paracoccus denitrificans (strain Pd 1222).